The following is a 1127-amino-acid chain: Zinc finger protein basonuclin-2 (1127 aa).

Positions S44–D67 are disordered. Over residues V49–D67 the composition is skewed to basic and acidic residues. K305 participates in a covalent cross-link: Glycyl lysine isopeptide (Lys-Gly) (interchain with G-Cter in SUMO2). The disordered stretch occupies residues S386–S450. The span at N389 to S400 shows a compositional bias: low complexity. Residues P403–E422 are compositionally biased toward polar residues. Residues K424, K444, and K449 each participate in a glycyl lysine isopeptide (Lys-Gly) (interchain with G-Cter in SUMO2) cross-link. The C2H2-type 1 zinc finger occupies V469–H492. S589 carries the phosphoserine modification. A Glycyl lysine isopeptide (Lys-Gly) (interchain with G-Cter in SUMO2) cross-link involves residue K669. The interval I675–L772 is disordered. Residues D676–N689 are compositionally biased toward acidic residues. Basic and acidic residues-rich tracts occupy residues M698–D708 and E747–L772. A C2H2-type 2 zinc finger spans residues K861–H884. Glycyl lysine isopeptide (Lys-Gly) (interchain with G-Cter in SUMO2) cross-links involve residues K922 and K947. Disordered regions lie at residues L955–G976 and L996–G1041. Residues A1010–G1023 show a composition bias toward acidic residues. 2 C2H2-type zinc fingers span residues I1063–H1086 and H1091–H1118. Residues S1107–D1127 are disordered.

Highly expressed in ovary, testis and kidney. Expressed at moderate levels in skin and small intestine, and at lower levels in lung. Trace amounts of expression detected in liver and colon. Not detected in brain, spleen or thymus.

It is found in the nucleus. Its function is as follows. Probable transcription factor specific for skin keratinocytes. May play a role in the differentiation of spermatozoa and oocytes. May also play an important role in early urinary-tract development. The polypeptide is Zinc finger protein basonuclin-2 (Mus musculus (Mouse)).